The sequence spans 247 residues: Triosephosphate isomerase (247 aa).

2 residues coordinate substrate: Asn10 and Lys12. His94 functions as the Electrophile in the catalytic mechanism. The active-site Proton acceptor is the Glu164.

Belongs to the triosephosphate isomerase family. As to quaternary structure, homodimer.

Its subcellular location is the cytoplasm. It catalyses the reaction D-glyceraldehyde 3-phosphate = dihydroxyacetone phosphate. It carries out the reaction dihydroxyacetone phosphate = methylglyoxal + phosphate. It functions in the pathway carbohydrate biosynthesis; gluconeogenesis. It participates in carbohydrate degradation; glycolysis; D-glyceraldehyde 3-phosphate from glycerone phosphate: step 1/1. In terms of biological role, triosephosphate isomerase is an extremely efficient metabolic enzyme that catalyzes the interconversion between dihydroxyacetone phosphate (DHAP) and D-glyceraldehyde-3-phosphate (G3P) in glycolysis and gluconeogenesis. It is also responsible for the non-negligible production of methylglyoxal a reactive cytotoxic side-product that modifies and can alter proteins, DNA and lipids. The protein is Triosephosphate isomerase (tpi-1) of Caenorhabditis elegans.